A 248-amino-acid polypeptide reads, in one-letter code: 3-deoxy-manno-octulosonate cytidylyltransferase (248 aa).

This sequence belongs to the KdsB family.

The protein resides in the cytoplasm. The catalysed reaction is 3-deoxy-alpha-D-manno-oct-2-ulosonate + CTP = CMP-3-deoxy-beta-D-manno-octulosonate + diphosphate. It functions in the pathway nucleotide-sugar biosynthesis; CMP-3-deoxy-D-manno-octulosonate biosynthesis; CMP-3-deoxy-D-manno-octulosonate from 3-deoxy-D-manno-octulosonate and CTP: step 1/1. The protein operates within bacterial outer membrane biogenesis; lipopolysaccharide biosynthesis. Its function is as follows. Activates KDO (a required 8-carbon sugar) for incorporation into bacterial lipopolysaccharide in Gram-negative bacteria. The polypeptide is 3-deoxy-manno-octulosonate cytidylyltransferase (Photobacterium profundum (strain SS9)).